The sequence spans 607 residues: Albumin (607 aa).

The first 18 residues, 1 to 18, serve as a signal peptide directing secretion; sequence MKWVTFISLLLLFSSAYS. A propeptide spanning residues 19-24 is cleaved from the precursor; it reads RGVFRR. 3 consecutive Albumin domains span residues 19–209, 210–402, and 403–600; these read RGVF…DAMR, EKVL…KLKH, and LVDE…KLVA. Residue H27 participates in Cu cation binding. The residue at position 29 (S29) is a Phosphoserine. Ca(2+) contacts are provided by E30 and D37. Residues C77 and C86 are joined by a disulfide bond. Phosphoserine is present on residues S82 and S89. H91 is a binding site for Zn(2+). 6 disulfides stabilise this stretch: C99–C115, C114–C125, C147–C192, C191–C200, C223–C269, and C268–C276. T107 carries the phosphothreonine modification. K228 is modified (N6-succinyllysine). E267 contacts Ca(2+). Zn(2+) contacts are provided by H270 and D272. Ca(2+) is bound by residues D272, E275, D278, and D282. Cystine bridges form between C288/C302, C301/C312, C339/C384, C383/C392, C415/C461, C460/C471, C484/C500, and C499/C510. S296 carries the post-translational modification Phosphoserine. S442 carries the post-translational modification Phosphoserine. Phosphothreonine is present on residues T443 and T445. K459 is subject to N6-succinyllysine. A Phosphoserine modification is found at S512. 2 disulfide bridges follow: C537–C582 and C581–C590. N6-methyllysine is present on K557. T569 is subject to Phosphothreonine. Residue K587 is modified to N6-succinyllysine.

It belongs to the ALB/AFP/VDB family. In terms of assembly, interacts with FCGRT; this interaction regulates ALB homeostasis. Interacts with TASOR. In plasma, occurs in a covalently-linked complex with chromophore-bound alpha-1-microglobulin; this interaction does not prevent fatty acid binding to ALB. In terms of processing, phosphorylated by FAM20C in the extracellular medium. As to expression, plasma.

It localises to the secreted. Functionally, binds water, Ca(2+), Na(+), K(+), fatty acids, hormones, bilirubin and drugs. Its main function is the regulation of the colloidal osmotic pressure of blood. Major zinc transporter in plasma, typically binds about 80% of all plasma zinc. Major calcium and magnesium transporter in plasma, binds approximately 45% of circulating calcium and magnesium in plasma. Potentially has more than two calcium-binding sites and might additionally bind calcium in a non-specific manner. The shared binding site between zinc and calcium at residue Asp-272 suggests a crosstalk between zinc and calcium transport in the blood. The rank order of affinity is zinc &gt; calcium &gt; magnesium. Binds to the bacterial siderophore enterobactin and inhibits enterobactin-mediated iron uptake of E.coli from ferric transferrin, and may thereby limit the utilization of iron and growth of enteric bacteria such as E.coli. Does not prevent iron uptake by the bacterial siderophore aerobactin. The sequence is that of Albumin (ALB) from Ovis aries (Sheep).